The sequence spans 620 residues: Sodium-dependent dopamine transporter (620 aa).

At 1 to 56 (MSKSKCSVGLMSSVVAPAKEPNAMGPKEVELILVKEQNGVQLTSSTLTNPRQSPVE) the chain is on the cytoplasmic side. Residues 57–95 (AQDRETWGKKIDFLLSVIGFAVDLANVWRFPYLCYKNGG) form a discontinuously helical membrane-spanning segment. Residues G75, A77, V78, D79, and N82 each contribute to the Na(+) site. D79 provides a ligand contact to dopamine. The next 2 membrane-spanning stretches (helical) occupy residues 96–127 (GAFL…NREG) and 128–171 (AAGV…FSSF). Residues S149 and G153 each coordinate dopamine. Residues 172-236 (TTELPWIHCN…SHGIDDLGPP (65 aa)) lie on the Extracellular side of the membrane. C180 and C189 are oxidised to a cystine. Residues N181, N188, and N205 are each glycosylated (N-linked (GlcNAc...) asparagine). Transmembrane regions (helical) follow at residues 237-256 (RWQL…FSLW) and 257-287 (KGVK…GVTL). Over 288–306 (PGAIDGIRAYLSVDFYRLC) the chain is Extracellular. Residues 307–335 (EASVWIDAATQVCFSLGVGFGVLIAFSSY) traverse the membrane as a discontinuously helical segment. Position 317 (Q317) interacts with chloride. F320 contributes to the dopamine binding site. Na(+)-binding residues include S321 and N353. S321 lines the chloride pocket. The helical transmembrane segment at 336-376 (NKFTNNCYRDAIVTTSINSLTSFSSGFVVFSFLGYMAQKHS) threads the bilayer. S357 provides a ligand contact to chloride. Over 377–400 (VPIGDVAKDGPGLIFIIYPEAIAT) the chain is Extracellular. Transmembrane regions (helical) follow at residues 401-442 (LPLS…QLLH), 443-466 (RHRE…CVTN), and 467-499 (GGIY…AWFY). The Na(+) site is built by L418, D421, and S422. Residues S422 and A423 each coordinate dopamine. Over 500–516 (GVGQFSDDIQQMTGQRP) the chain is Cytoplasmic. Residues 517 to 542 (SLYWRLCWKLVSPCFLLFVVVVSIVT) form a helical membrane-spanning segment. Residues 543–553 (FRPPHYGAYIF) are Extracellular-facing. The helical transmembrane segment at 554-583 (PDWANALGWVIATSSMAMVPIYAAYKFCSL) threads the bilayer. The segment at 561-590 (GWVIATSSMAMVPIYAAYKFCSLPGSFREK) is interaction with TGFB1I1. Topologically, residues 584–620 (PGSFREKLAYAIAPEKDRELVDRGEVRQFTLRHWLKV) are cytoplasmic.

It belongs to the sodium:neurotransmitter symporter (SNF) (TC 2.A.22) family. SLC6A3 subfamily. Monomer. Homooligomer; disulfide-linked. Interacts with PRKCABP and TGFB1I1. Interacts (via N-terminus) with SYNGR3 (via N-terminus). Interacts with SLC18A2. Interacts with TOR1A (ATP-bound); TOR1A regulates SLC6A3 subcellular location. Interacts with alpha-synuclein/SNCA. Interacts with SEPTIN4.

It localises to the cell membrane. It is found in the cell projection. The protein resides in the neuron projection. The protein localises to the axon. The catalysed reaction is dopamine(out) + chloride(out) + Na(+)(out) = dopamine(in) + chloride(in) + Na(+)(in). The enzyme catalyses (R)-noradrenaline(out) + chloride(out) + Na(+)(out) = (R)-noradrenaline(in) + chloride(in) + Na(+)(in). It carries out the reaction dopamine(out) + chloride(out) + 2 Na(+)(out) = dopamine(in) + chloride(in) + 2 Na(+)(in). With respect to regulation, inhibited by zinc ions. Its function is as follows. Mediates sodium- and chloride-dependent transport of dopamine. Also mediates sodium- and chloride-dependent transport of norepinephrine (also known as noradrenaline). Regulator of light-dependent retinal hyaloid vessel regression, downstream of OPN5 signaling. In Macaca fascicularis (Crab-eating macaque), this protein is Sodium-dependent dopamine transporter (SLC6A3).